The following is a 173-amino-acid chain: Crossover junction endodeoxyribonuclease RuvC (173 aa).

Active-site residues include Asp8, Glu67, and Asp139. Mg(2+) contacts are provided by Asp8, Glu67, and Asp139.

Belongs to the RuvC family. Homodimer which binds Holliday junction (HJ) DNA. The HJ becomes 2-fold symmetrical on binding to RuvC with unstacked arms; it has a different conformation from HJ DNA in complex with RuvA. In the full resolvosome a probable DNA-RuvA(4)-RuvB(12)-RuvC(2) complex forms which resolves the HJ. The cofactor is Mg(2+).

Its subcellular location is the cytoplasm. It catalyses the reaction Endonucleolytic cleavage at a junction such as a reciprocal single-stranded crossover between two homologous DNA duplexes (Holliday junction).. Its function is as follows. The RuvA-RuvB-RuvC complex processes Holliday junction (HJ) DNA during genetic recombination and DNA repair. Endonuclease that resolves HJ intermediates. Cleaves cruciform DNA by making single-stranded nicks across the HJ at symmetrical positions within the homologous arms, yielding a 5'-phosphate and a 3'-hydroxyl group; requires a central core of homology in the junction. The consensus cleavage sequence is 5'-(A/T)TT(C/G)-3'. Cleavage occurs on the 3'-side of the TT dinucleotide at the point of strand exchange. HJ branch migration catalyzed by RuvA-RuvB allows RuvC to scan DNA until it finds its consensus sequence, where it cleaves and resolves the cruciform DNA. This is Crossover junction endodeoxyribonuclease RuvC from Aeromonas salmonicida (strain A449).